The sequence spans 216 residues: Protein-L-isoaspartate O-methyltransferase (216 aa).

Residue Ser-61 is part of the active site.

This sequence belongs to the methyltransferase superfamily. L-isoaspartyl/D-aspartyl protein methyltransferase family.

It localises to the cytoplasm. It carries out the reaction [protein]-L-isoaspartate + S-adenosyl-L-methionine = [protein]-L-isoaspartate alpha-methyl ester + S-adenosyl-L-homocysteine. In terms of biological role, catalyzes the methyl esterification of L-isoaspartyl residues in peptides and proteins that result from spontaneous decomposition of normal L-aspartyl and L-asparaginyl residues. It plays a role in the repair and/or degradation of damaged proteins. The chain is Protein-L-isoaspartate O-methyltransferase (pcm) from Pyrococcus abyssi (strain GE5 / Orsay).